Reading from the N-terminus, the 395-residue chain is Chorismate synthase (395 aa).

The NADP(+) site is built by Arg-40 and Arg-46. The segment at Leu-98–Met-120 is disordered. Residues Arg-134–Ser-136, Gln-256–Ala-257, Gly-301, Lys-316–Ser-320, and Arg-342 each bind FMN.

It belongs to the chorismate synthase family. Homotetramer. Requires FMNH2 as cofactor.

It catalyses the reaction 5-O-(1-carboxyvinyl)-3-phosphoshikimate = chorismate + phosphate. It functions in the pathway metabolic intermediate biosynthesis; chorismate biosynthesis; chorismate from D-erythrose 4-phosphate and phosphoenolpyruvate: step 7/7. In terms of biological role, catalyzes the anti-1,4-elimination of the C-3 phosphate and the C-6 proR hydrogen from 5-enolpyruvylshikimate-3-phosphate (EPSP) to yield chorismate, which is the branch point compound that serves as the starting substrate for the three terminal pathways of aromatic amino acid biosynthesis. This reaction introduces a second double bond into the aromatic ring system. This chain is Chorismate synthase, found in Bifidobacterium longum subsp. infantis (strain ATCC 15697 / DSM 20088 / JCM 1222 / NCTC 11817 / S12).